The chain runs to 152 residues: Nucleoside diphosphate kinase (152 aa).

ATP contacts are provided by Lys-11, Phe-59, Arg-87, Thr-93, Arg-104, and Asn-114. The active-site Pros-phosphohistidine intermediate is His-117.

Belongs to the NDK family. Homotetramer. The cofactor is Mg(2+).

The protein localises to the cytoplasm. It carries out the reaction a 2'-deoxyribonucleoside 5'-diphosphate + ATP = a 2'-deoxyribonucleoside 5'-triphosphate + ADP. It catalyses the reaction a ribonucleoside 5'-diphosphate + ATP = a ribonucleoside 5'-triphosphate + ADP. Its function is as follows. Major role in the synthesis of nucleoside triphosphates other than ATP. The ATP gamma phosphate is transferred to the NDP beta phosphate via a ping-pong mechanism, using a phosphorylated active-site intermediate. The chain is Nucleoside diphosphate kinase from Prochlorococcus marinus (strain MIT 9303).